A 539-amino-acid polypeptide reads, in one-letter code: Phosphoenolpyruvate carboxykinase (ATP) (539 aa).

Arg-64, Tyr-206, and Lys-212 together coordinate substrate. ATP contacts are provided by residues Lys-212, His-231, and Gly-247–Thr-255. Residues Lys-212 and His-231 each coordinate Mn(2+). Asp-268 contacts Mn(2+). Residues Glu-296, Arg-332, Arg-448–Ile-449, and Thr-454 each bind ATP. Residue Arg-332 coordinates substrate.

It belongs to the phosphoenolpyruvate carboxykinase (ATP) family. Monomer. Requires Mn(2+) as cofactor.

It is found in the cytoplasm. The enzyme catalyses oxaloacetate + ATP = phosphoenolpyruvate + ADP + CO2. It functions in the pathway carbohydrate biosynthesis; gluconeogenesis. In terms of biological role, involved in the gluconeogenesis. Catalyzes the conversion of oxaloacetate (OAA) to phosphoenolpyruvate (PEP) through direct phosphoryl transfer between the nucleoside triphosphate and OAA. This Citrobacter koseri (strain ATCC BAA-895 / CDC 4225-83 / SGSC4696) protein is Phosphoenolpyruvate carboxykinase (ATP).